The following is a 252-amino-acid chain: Putative endonuclease C1F12.06c (252 aa).

Positions 43 and 114 each coordinate Mg(2+).

The protein belongs to the endonuclease V family.

The protein resides in the cytoplasm. The protein localises to the nucleus. The protein is Putative endonuclease C1F12.06c of Schizosaccharomyces pombe (strain 972 / ATCC 24843) (Fission yeast).